The following is a 113-amino-acid chain: Type III endosome membrane protein TEMP (113 aa).

The disordered stretch occupies residues 1–22 (MNETNKTLVGPSELPTASAVAP). Over 1–29 (MNETNKTLVGPSELPTASAVAPGPGTGAR) the chain is Extracellular. Residue asparagine 5 is glycosylated (N-linked (GlcNAc...) asparagine). A helical; Signal-anchor for type III membrane protein membrane pass occupies residues 30–50 (AWPVLVGFVLGAVVLSLLIAL). Residues 51–113 (AAKCHLCRRY…TEGSRDHFSL (63 aa)) lie on the Cytoplasmic side of the membrane. The segment at 66–113 (HRPLPETGRGGRPQVAEDEDDDGFIEDNYIQPGTGELGTEGSRDHFSL) is disordered. Residues 81 to 90 (AEDEDDDGFI) show a composition bias toward acidic residues.

Its subcellular location is the membrane. The protein resides in the early endosome. The protein localises to the recycling endosome. It is found in the cell membrane. Its function is as follows. May be involved in membrane trafficking between endosomes and plasma membrane. In Homo sapiens (Human), this protein is Type III endosome membrane protein TEMP (C1orf210).